The sequence spans 174 residues: Small ribosomal subunit protein uS5 (174 aa).

Residues 19-82 (LREKMIAVNR…EQARRGMFKV (64 aa)) form the S5 DRBM domain.

It belongs to the universal ribosomal protein uS5 family. As to quaternary structure, part of the 30S ribosomal subunit. Contacts proteins S4 and S8.

Functionally, with S4 and S12 plays an important role in translational accuracy. In terms of biological role, located at the back of the 30S subunit body where it stabilizes the conformation of the head with respect to the body. This chain is Small ribosomal subunit protein uS5, found in Bordetella bronchiseptica (strain ATCC BAA-588 / NCTC 13252 / RB50) (Alcaligenes bronchisepticus).